A 357-amino-acid polypeptide reads, in one-letter code: Membrane-bound lytic murein transglycosylase C (357 aa).

The signal sequence occupies residues 1-15 (MKKYLLLALLPFLYA). The N-palmitoyl cysteine moiety is linked to residue cysteine 16. Residue cysteine 16 is the site of S-diacylglycerol cysteine attachment.

Belongs to the transglycosylase Slt family.

Its subcellular location is the cell outer membrane. It catalyses the reaction Exolytic cleavage of the (1-&gt;4)-beta-glycosidic linkage between N-acetylmuramic acid (MurNAc) and N-acetylglucosamine (GlcNAc) residues in peptidoglycan, from either the reducing or the non-reducing ends of the peptidoglycan chains, with concomitant formation of a 1,6-anhydrobond in the MurNAc residue.. In terms of biological role, murein-degrading enzyme. May play a role in recycling of muropeptides during cell elongation and/or cell division. The protein is Membrane-bound lytic murein transglycosylase C of Haemophilus influenzae (strain ATCC 51907 / DSM 11121 / KW20 / Rd).